Reading from the N-terminus, the 259-residue chain is Deoxyribose-phosphate aldolase (259 aa).

Asp102 acts as the Proton donor/acceptor in catalysis. The active-site Schiff-base intermediate with acetaldehyde is Lys167. Residue Lys201 is the Proton donor/acceptor of the active site.

This sequence belongs to the DeoC/FbaB aldolase family. DeoC type 2 subfamily.

It is found in the cytoplasm. It catalyses the reaction 2-deoxy-D-ribose 5-phosphate = D-glyceraldehyde 3-phosphate + acetaldehyde. It functions in the pathway carbohydrate degradation; 2-deoxy-D-ribose 1-phosphate degradation; D-glyceraldehyde 3-phosphate and acetaldehyde from 2-deoxy-alpha-D-ribose 1-phosphate: step 2/2. In terms of biological role, catalyzes a reversible aldol reaction between acetaldehyde and D-glyceraldehyde 3-phosphate to generate 2-deoxy-D-ribose 5-phosphate. The sequence is that of Deoxyribose-phosphate aldolase from Proteus mirabilis (strain HI4320).